The chain runs to 138 residues: Small ribosomal subunit protein uS11 (138 aa).

Belongs to the universal ribosomal protein uS11 family. As to quaternary structure, part of the 30S ribosomal subunit.

Its function is as follows. Located on the platform of the 30S subunit. This chain is Small ribosomal subunit protein uS11, found in Pyrobaculum arsenaticum (strain DSM 13514 / JCM 11321 / PZ6).